Consider the following 249-residue polypeptide: 2,3-bisphosphoglycerate-dependent phosphoglycerate mutase (249 aa).

Substrate contacts are provided by residues 10 to 17, 23 to 24, Arg-62, 89 to 92, Lys-100, 116 to 117, and 185 to 186; these read RHGESEWN, TG, ERHY, RR, and GN. The Tele-phosphohistidine intermediate role is filled by His-11. Catalysis depends on Glu-89, which acts as the Proton donor/acceptor.

The protein belongs to the phosphoglycerate mutase family. BPG-dependent PGAM subfamily. Homodimer.

It carries out the reaction (2R)-2-phosphoglycerate = (2R)-3-phosphoglycerate. The protein operates within carbohydrate degradation; glycolysis; pyruvate from D-glyceraldehyde 3-phosphate: step 3/5. Its function is as follows. Catalyzes the interconversion of 2-phosphoglycerate and 3-phosphoglycerate. This chain is 2,3-bisphosphoglycerate-dependent phosphoglycerate mutase, found in Hamiltonella defensa subsp. Acyrthosiphon pisum (strain 5AT).